The sequence spans 575 residues: FAD-dependent monooxygenase rstn6 (575 aa).

A signal peptide spans 1–17; sequence MYDVIVIGAGWCGLVAA. Residue isoleucine 106 participates in FAD binding. N-linked (GlcNAc...) asparagine glycans are attached at residues asparagine 239 and asparagine 295.

The protein belongs to the FAD-binding monooxygenase family. It depends on FAD as a cofactor.

Its pathway is antifungal biosynthesis. FAD-dependent monooxygenase; part of the gene cluster that mediates the biosynthesis of the tetrahydropyranyl antifungal agent restricticin that acts as an inhibitor of CYP51 and blocks the ergosterol biosynthesis. The highly reducing polyketide synthase rstn3, the short chain dehydrogenase rstn4, the cyclase rstn5, the FAD-dependent monooxygenase rstn6 and the enoylreductase rstn7 are required to generate the first stable intermediate desmethylrestrictinol. Rstn3 with rstn7 biosynthesize the first polyketide chain intermediate that is reduced by rstn4, followed by epoxidation by rstn6 before 6-endo cyclization via epoxide opening by rstn5 leads to desmethylrestrictinol. The methyltransferase rstn1 then catalyzes the C4 O-methylation of desmethylrestrictinol to produce restrictinol, and the nonribosomal peptide synthetase rstn8 catalyzes the C3 esterification of restrictinol with glycine that leads to restricticin. This is FAD-dependent monooxygenase rstn6 from Aspergillus nomiae NRRL (strain ATCC 15546 / NRRL 13137 / CBS 260.88 / M93).